The chain runs to 1151 residues: Elicitor of plant defense protein 1 (1151 aa).

Disordered regions lie at residues 22-130 (YQDP…TLGE), 178-197 (ERIRAEESDSGRLSPLRSIK), and 236-255 (NYNSVIPPPEPLNTDPDMHP). Positions 39–49 (IIEDGEPEDEW) are enriched in acidic residues. Positions 64–99 (QNSASRLSKMSLTERFSIQTLDDTDGNTKSNRSSAT) are enriched in polar residues. Low complexity predominate over residues 104–122 (NPPDFSNGNDDSNGNSQNP). Positions 178 to 187 (ERIRAEESDS) are enriched in basic and acidic residues. The region spanning 242–500 (PPPEPLNTDP…NLCTEAFNPL (259 aa)) is the uDENN domain. One can recognise a cDENN domain in the interval 524 to 656 (EIPGSRTIDI…ARRKLMSLLQ (133 aa)). One can recognise a dDENN domain in the interval 658–1019 (AAPHKLRYGV…DREMQPANDA (362 aa)). Polar residues-rich tracts occupy residues 695-711 (STPKSTLGKWVSQSSSG) and 744-760 (TSKSGKTSPQSSVSPVS). The interval 695–809 (STPKSTLGKW…SSSFGVDKHP (115 aa)) is disordered. Basic and acidic residues predominate over residues 784–798 (LREKRSGHFGEEKMR). The Phorbol-ester/DAG-type zinc-finger motif lies at 886–934 (GHCFNYMPKDNTSMCTICNDLAEGDGVYRCTGCKIVSHGRCLGYCSLIC).

It belongs to the EPD1 elicitor family.

Its subcellular location is the secreted. The protein localises to the host cell. Functionally, acts as an elicitor that triggers cell death and defense responses in the host plants. This is Elicitor of plant defense protein 1 from Gibberella zeae (strain ATCC MYA-4620 / CBS 123657 / FGSC 9075 / NRRL 31084 / PH-1) (Wheat head blight fungus).